The sequence spans 152 residues: UPF0225 protein YchJ (152 aa).

Belongs to the UPF0225 family.

The sequence is that of UPF0225 protein YchJ from Escherichia coli O139:H28 (strain E24377A / ETEC).